The chain runs to 91 residues: Putative regulatory protein Tlet_1629 (91 aa).

The protein belongs to the RemA family.

The chain is Putative regulatory protein Tlet_1629 from Pseudothermotoga lettingae (strain ATCC BAA-301 / DSM 14385 / NBRC 107922 / TMO) (Thermotoga lettingae).